The sequence spans 319 residues: Glutamyl-Q tRNA(Asp) synthetase (319 aa).

L-glutamate contacts are provided by residues 23–27 (RFAPS) and Glu-59. A 'HIGH' region motif is present at residues 26-36 (PSPSGPLHAGS). The Zn(2+) site is built by Cys-115, Cys-117, Tyr-139, and Cys-143. Residues Tyr-197 and Arg-215 each coordinate L-glutamate. A 'KMSKS' region motif is present at residues 254 to 258 (KLSKQ). Lys-257 provides a ligand contact to ATP.

The protein belongs to the class-I aminoacyl-tRNA synthetase family. GluQ subfamily. It depends on Zn(2+) as a cofactor.

Catalyzes the tRNA-independent activation of glutamate in presence of ATP and the subsequent transfer of glutamate onto a tRNA(Asp). Glutamate is transferred on the 2-amino-5-(4,5-dihydroxy-2-cyclopenten-1-yl) moiety of the queuosine in the wobble position of the QUC anticodon. The chain is Glutamyl-Q tRNA(Asp) synthetase from Bordetella bronchiseptica (strain ATCC BAA-588 / NCTC 13252 / RB50) (Alcaligenes bronchisepticus).